A 277-amino-acid chain; its full sequence is Large ribosomal subunit protein uL2 (277 aa).

A disordered region spans residues 216–277 (RRPHNRGVAM…IIRRRKVGKG (62 aa)).

It belongs to the universal ribosomal protein uL2 family. In terms of assembly, part of the 50S ribosomal subunit. Forms a bridge to the 30S subunit in the 70S ribosome.

Its function is as follows. One of the primary rRNA binding proteins. Required for association of the 30S and 50S subunits to form the 70S ribosome, for tRNA binding and peptide bond formation. It has been suggested to have peptidyltransferase activity; this is somewhat controversial. Makes several contacts with the 16S rRNA in the 70S ribosome. The polypeptide is Large ribosomal subunit protein uL2 (Acidiphilium cryptum (strain JF-5)).